The chain runs to 445 residues: GTPase Der (445 aa).

2 consecutive EngA-type G domains span residues 3-167 (PVIA…YAGQ) and 180-353 (IKIA…AAAM). Residues 9–16 (GRPNVGKS), 56–60 (DTGGF), 119–122 (NKAE), 186–193 (GRPNVGKS), 233–237 (DTAGL), and 298–301 (NKWD) each bind GTP. Residues 354 to 438 (AKLPTPKLTR…PLRIEFRSSN (85 aa)) enclose the KH-like domain.

The protein belongs to the TRAFAC class TrmE-Era-EngA-EngB-Septin-like GTPase superfamily. EngA (Der) GTPase family. Associates with the 50S ribosomal subunit.

In terms of biological role, GTPase that plays an essential role in the late steps of ribosome biogenesis. The protein is GTPase Der of Burkholderia ambifaria (strain MC40-6).